The sequence spans 139 residues: Angiogenin (139 aa).

The signal sequence occupies residues 1 to 21; the sequence is MAMSSLWWTAILLLALTVSMC. The Proton acceptor role is filled by His34. 3 disulfide bridges follow: Cys49/Cys102, Cys64/Cys111, and Cys82/Cys126. The tRNA site is built by Cys102 and Val122. The active-site Proton donor is His133.

The protein belongs to the pancreatic ribonuclease family. In terms of assembly, homodimer. Interacts with RNH1; inhibiting ANG ribonuclease activity.

Its subcellular location is the secreted. It localises to the nucleus. The protein localises to the nucleolus. The protein resides in the cytoplasm. It is found in the stress granule. Functionally, secreted ribonuclease that can either promote or restrict cell proliferation of target cells, depending on the context. Endocytosed in target cells via its receptor PLXNB2 and translocates to the cytoplasm or nucleus. Under stress conditions, localizes to the cytoplasm and promotes the assembly of stress granules (SGs): specifically cleaves a subset of tRNAs within anticodon loops to produce tRNA-derived stress-induced fragments (tiRNAs), resulting in translation repression and inhibition of cell proliferation. tiRNas also prevent formation of apoptosome, thereby promoting cell survival. Preferentially cleaves RNAs between a pyrimidine and an adenosine residue, suggesting that it cleaves the anticodon loop of tRNA(Ala) (32-UUAGCAU-38) after positions 33 and 36. Cleaves a subset of tRNAs, including tRNA(Ala), tRNA(Glu), tRNA(Gly), tRNA(Lys), tRNA(Val), tRNA(His), tRNA(Asp) and tRNA(Sec). Under growth conditions and in differentiated cells, translocates to the nucleus and stimulates ribosomal RNA (rRNA) transcription, including that containing the initiation site sequences of 45S rRNA, thereby promoting cell growth and proliferation. Angiogenin induces vascularization of normal and malignant tissues via its ability to promote rRNA transcription. This is Angiogenin (ANG) from Gallus gallus (Chicken).